Consider the following 436-residue polypeptide: FAD-dependent monooxygenase pigN (436 aa).

FAD-binding residues include glutamate 40, glycine 53, and arginine 118. Arginine 200 is an active-site residue. Aspartate 316 and alanine 329 together coordinate FAD.

The protein belongs to the paxM FAD-dependent monooxygenase family. FAD is required as a cofactor.

It functions in the pathway secondary metabolite biosynthesis. Its function is as follows. FAD-dependent monooxygenase; part of the gene cluster that mediates the biosynthesis of azaphilone pigments (MonAzPs), a complex mixture of compounds with a common azaphilone skeleton very widely used as food colorants. Within the pathway, pigN hydroxylates the benzaldehyde M7PKS-1 intermediate at C-4 to form the pyran ring. The first step of the pathway is performed by the nrPKS pigA that forms the hexaketide precursor from successive condensations of five malonyl-CoA units, with a simple acetyl-CoA starter unit. The role of esterase pigG is not clear, but it may play at most a supplementary role in the formation of the benzaldehyde produced by the pigA nrPKS. This very reactive benzaldehyde is intercepted by the pigC ketoreductase that to provide the first stable enzyme-free MonAzPs intermediate, 6-(4-hydroxy-2-oxopentyl)-3-methyl-2,4-dioxocyclohexane carbaldehyde, also known as M7PKS-1. The FAD-dependent monooxygenase pigN hydroxylates M7PKS-1 at C-4, which triggers the formation of the pyran ring. PigJ, pigK and pigD are involved in the acetylation of the pyran ring. PigJ and pigK form the two subunits of a dedicated fungal FAS that produces the side chain fatty acyl moiety of MonAzPs and pigD transfers the fatty acyl chain to the C-4 alcohol. PigM and pigO are involved in the elimination of the omega-1 alcohol. PigM acts as an O-acetyltransferase that synthesizes the putative O-11 acetyl intermediate whereas pigO eliminates acetic acid to yield an intermediate with a C10(11) double bond. The dehydration of the C-11 alcohol followed by the reduction of the C6(7) double bond by the NAD(P)H-dependent oxidoreductase pigE increases the electrophilicity of the C-5 ketone of the resulting acyl benzopyran. This in turn sets up the C-5 ketone for an intramolecular Knoevenagel aldol condensation with the C-20 enol of the side chain. This condensation affords the characteristic linear tricyclic carbon skeletons of the yellow pigments that serve as the common precursors for the classical yellow pigments monascin and ankaflavin, orange pigments rubopunctatin and monascorubrin, and red pigments ribropunctamine and monascorubramine. The FAD-dependent oxidoreductase pigF is especially invoved in the biosynthesis of orange and red pigments via desaturation of C6(7). This is FAD-dependent monooxygenase pigN from Monascus ruber (Mold).